A 391-amino-acid chain; its full sequence is Probable inactive allantoicase (391 aa).

It belongs to the allantoicase family.

In terms of biological role, the function of this enzyme is unclear as allantoicase activity is not known to exist in mammals. This Homo sapiens (Human) protein is Probable inactive allantoicase.